The chain runs to 1023 residues: Protein FAM13A (1023 aa).

A Rho-GAP domain is found at 43-231 (VSLQELERQG…KILENYNTLF (189 aa)). Residues 269 to 290 (LERDMPKPPPKTKIPKSRSEGS) form a disordered region. At serine 345 the chain carries Phosphoserine. 2 disordered regions span residues 381 to 437 (VNNS…SGFN) and 459 to 562 (CAGE…EVPQ). Low complexity predominate over residues 384 to 405 (SGGQSSEDSESGTLSASSATSA). 2 stretches are compositionally biased toward basic and acidic residues: residues 412 to 427 (SKEQDEVRHGRDKGLI) and 509 to 524 (SDERKGNEKDGGHTQH). Polar residues predominate over residues 536–549 (PSLSDTKQQRNQDA). Phosphoserine is present on residues serine 597 and serine 617. Disordered stretches follow at residues 628-663 (QYLDDTEVPPSPPNSHSFMRRRSSSLGSYDDEQEDL) and 726-759 (ISEEDLTPRMRQRSNTLPKSFGSQLEKEDEKKQE). A coiled-coil region spans residues 666–730 (AQLTRRIQSL…ESKLKISEED (65 aa)). Position 727 is a phosphoserine (serine 727). Threonine 732 carries the post-translational modification Phosphothreonine. The span at 738–748 (RSNTLPKSFGS) shows a compositional bias: polar residues. Over residues 750–759 (LEKEDEKKQE) the composition is skewed to basic and acidic residues. Residues 946 to 978 (ASIPELLEHLQEMREEKKRIRKKLRDFEDNFFR) adopt a coiled-coil conformation.

The protein belongs to the FAM13 family. In terms of tissue distribution, isoform 1 is widely expressed, with highest expression in skeletal muscle, thymus, brain and lung. Isoform 3 is less abundant than isoform 1 and predominantly expressed in kidney, pancreas, liver, lung and thymus.

The protein is Protein FAM13A (FAM13A) of Homo sapiens (Human).